The following is a 420-amino-acid chain: MAEVKVPELAESITEGTIAEWLKNVGDNVDKGEAILELETDKVNVEVVSEEAGVLSEQLAEEGDTVEVGQAVAVVGEGQVNTSNDSSNESSQKDEAKEKETPKQSNPNSSESENTQDNSQQRINATPSARRHARKNGVDLSEVSGKGNDVLRKDDVENSQKSSSQTAKSESKSQNSGSKQSNNNPSKPVIREKMSRRKKTAAKKLLEVSNQTAMLTTFNEVDMTNVMDLRKRKKEQFIKDHDGTKLGFMSFFTKAAVAALKKYPEVNAEIDGDDMITKQFYDIGIAVSTDDGLLVPFVRDCDKKNFAEIEQEIANLAVKARDKKLGLDDMVNGSFTITNGGIFGSMMSTPIINGNQAAILGMHSIITRPIAVDKDTIENRPMMYIALSYDHRIIDGKEAVGFLKTIKELIENPEDLLLES.

The Lipoyl-binding domain occupies 1–76 (MAEVKVPELA…EVGQAVAVVG (76 aa)). Lysine 42 is modified (N6-lipoyllysine). Positions 75 to 201 (VGEGQVNTSN…EKMSRRKKTA (127 aa)) are disordered. Residues 81–90 (NTSNDSSNES) are compositionally biased toward polar residues. Residues 91–102 (SQKDEAKEKETP) are compositionally biased toward basic and acidic residues. Residues 103 to 127 (KQSNPNSSESENTQDNSQQRINATP) are compositionally biased toward polar residues. A Peripheral subunit-binding (PSBD) domain is found at 124-160 (NATPSARRHARKNGVDLSEVSGKGNDVLRKDDVENSQ). Positions 149–158 (DVLRKDDVEN) are enriched in basic and acidic residues. Positions 159–188 (SQKSSSQTAKSESKSQNSGSKQSNNNPSKP) are enriched in low complexity. Residues histidine 391 and aspartate 395 contribute to the active site.

The protein belongs to the 2-oxoacid dehydrogenase family. As to quaternary structure, forms a 24-polypeptide structural core with octahedral symmetry. Part of the 2-oxoglutarate dehydrogenase (OGDH) complex composed of E1 (2-oxoglutarate dehydrogenase), E2 (dihydrolipoamide succinyltransferase) and E3 (dihydrolipoamide dehydrogenase); the complex contains multiple copies of the three enzymatic components (E1, E2 and E3). (R)-lipoate serves as cofactor.

It catalyses the reaction N(6)-[(R)-dihydrolipoyl]-L-lysyl-[protein] + succinyl-CoA = N(6)-[(R)-S(8)-succinyldihydrolipoyl]-L-lysyl-[protein] + CoA. It functions in the pathway amino-acid degradation; L-lysine degradation via saccharopine pathway; glutaryl-CoA from L-lysine: step 6/6. In terms of biological role, E2 component of the 2-oxoglutarate dehydrogenase (OGDH) complex which catalyzes the second step in the conversion of 2-oxoglutarate to succinyl-CoA and CO(2). The chain is Dihydrolipoyllysine-residue succinyltransferase component of 2-oxoglutarate dehydrogenase complex (odhB) from Staphylococcus epidermidis (strain ATCC 12228 / FDA PCI 1200).